Here is a 414-residue protein sequence, read N- to C-terminus: MYHRNILVEQTDPEIWAAIQAENARQEHHIELIASENYASPAVMAAQGSQLTNKYAEGYPGKRYYGGCEHVDVAEQLAIDRVKQIFGADAANVQPHCGASANEAVMLAFLKPGDTIMGMSLAEGGHLTHGMPLNMSGKWFNVVSYGLDANEAIDYDAMERKAHEHMPKLIIAGASAYSLRIDFERFAKVAKDVGAIFMVDIAHYAGLVAAGVYPNPVPHADVVTSTTHKSLRGPRGGIILMKSQHEKAINSAIFPGLQGGPLMHVIAAKAVAFKEAMSPEFKAYQQQVVKNAQIVADTLTERGLRIVSGRTESHVMLVDLRAKGITGKEAEAVLGSAHMTINKNAIPNDPEKPMVTSGVRIGTPAMTTRGFRDEEARITANLIADVLENPRDAANIDAVRAKVHALTSRFPVYR.

(6S)-5,6,7,8-tetrahydrofolate-binding positions include Leu121 and Gly125–Leu127. N6-(pyridoxal phosphate)lysine is present on Lys229.

Belongs to the SHMT family. In terms of assembly, homodimer. Pyridoxal 5'-phosphate is required as a cofactor.

The protein resides in the cytoplasm. It carries out the reaction (6R)-5,10-methylene-5,6,7,8-tetrahydrofolate + glycine + H2O = (6S)-5,6,7,8-tetrahydrofolate + L-serine. The protein operates within one-carbon metabolism; tetrahydrofolate interconversion. Its pathway is amino-acid biosynthesis; glycine biosynthesis; glycine from L-serine: step 1/1. Catalyzes the reversible interconversion of serine and glycine with tetrahydrofolate (THF) serving as the one-carbon carrier. This reaction serves as the major source of one-carbon groups required for the biosynthesis of purines, thymidylate, methionine, and other important biomolecules. Also exhibits THF-independent aldolase activity toward beta-hydroxyamino acids, producing glycine and aldehydes, via a retro-aldol mechanism. This chain is Serine hydroxymethyltransferase, found in Variovorax paradoxus (strain S110).